We begin with the raw amino-acid sequence, 293 residues long: Protease HtpX homolog (293 aa).

Helical transmembrane passes span 5–25 and 43–63; these read IFLFIVTNLAILLMLSITLRL and ALLVFSAVLGFGGSLISLAMS. Zn(2+) is bound at residue H148. E149 is an active-site residue. H152 provides a ligand contact to Zn(2+). The next 2 membrane-spanning stretches (helical) occupy residues 159–179 and 199–219; these read VTLALIQGVVNTFVIFLSRII and FVTSLIAQMVLGILATIIVMW. Position 225 (E225) interacts with Zn(2+).

Belongs to the peptidase M48B family. The cofactor is Zn(2+).

The protein localises to the cell inner membrane. This is Protease HtpX homolog from Nitrosomonas europaea (strain ATCC 19718 / CIP 103999 / KCTC 2705 / NBRC 14298).